We begin with the raw amino-acid sequence, 118 residues long: Ribosomal silencing factor RsfS (118 aa).

It belongs to the Iojap/RsfS family. Interacts with ribosomal protein uL14 (rplN).

The protein localises to the cytoplasm. Functions as a ribosomal silencing factor. Interacts with ribosomal protein uL14 (rplN), blocking formation of intersubunit bridge B8. Prevents association of the 30S and 50S ribosomal subunits and the formation of functional ribosomes, thus repressing translation. This is Ribosomal silencing factor RsfS from Bacillus subtilis (strain 168).